Reading from the N-terminus, the 963-residue chain is Bifunctional glutamine synthetase adenylyltransferase/adenylyl-removing enzyme (963 aa).

An adenylyl removase region spans residues 1 to 451 (MAAPSELQLY…EHFADIIAER (451 aa)). The adenylyl transferase stretch occupies residues 461–963 (TIEWKALWAG…VAFWEKVFAE (503 aa)).

This sequence belongs to the GlnE family. It depends on Mg(2+) as a cofactor.

The catalysed reaction is [glutamine synthetase]-O(4)-(5'-adenylyl)-L-tyrosine + phosphate = [glutamine synthetase]-L-tyrosine + ADP. It carries out the reaction [glutamine synthetase]-L-tyrosine + ATP = [glutamine synthetase]-O(4)-(5'-adenylyl)-L-tyrosine + diphosphate. In terms of biological role, involved in the regulation of glutamine synthetase GlnA, a key enzyme in the process to assimilate ammonia. When cellular nitrogen levels are high, the C-terminal adenylyl transferase (AT) inactivates GlnA by covalent transfer of an adenylyl group from ATP to specific tyrosine residue of GlnA, thus reducing its activity. Conversely, when nitrogen levels are low, the N-terminal adenylyl removase (AR) activates GlnA by removing the adenylyl group by phosphorolysis, increasing its activity. The regulatory region of GlnE binds the signal transduction protein PII (GlnB) which indicates the nitrogen status of the cell. This is Bifunctional glutamine synthetase adenylyltransferase/adenylyl-removing enzyme from Hahella chejuensis (strain KCTC 2396).